The chain runs to 387 residues: O-methyltransferase lepI (387 aa).

135-148 contacts substrate; it reads FENLWPVLMALPDF. The tract at residues 175 to 195 is substrate binding; the sequence is CFHWLATQPTRIANFKVLLTD. S-adenosyl-L-methionine contacts are provided by residues 227–228, aspartate 252, 275–276, and arginine 291; these read GG and NF.

The protein belongs to the class I-like SAM-binding methyltransferase superfamily. Cation-independent O-methyltransferase family.

Its function is as follows. O-methyltransferase; part of the gene cluster 23 that mediates the biosynthesis of a family of 2-pyridones known as leporins. The hybrid PKS-NRPS synthetase lepA and the enoyl reductase lepG are responsible for fusion of phenylalanine with a hexaketide and subsequent release of the stable tetramic acid precursor, pre-leporin C. Because lepA lacks a designated enoylreductase (ER) domain, the required activity is provided the enoyl reductase lepG. It is possible that the dehydrogenase lepF also participates in production of pre-leporin C. Cytochrome P450 monooxygenase lepH is then required for the ring expansion step to yield leporin C. Leporin C is then presumably further oxidized by the N-hydroxylase lepD to form leporin B. LepI may possess a function in biosynthesis upstream of lepA. Leporin B is further oxidized in the presence of ferric ion to give the leporin B trimer-iron chelate, but whether or not this reaction is catalyzed by an enzyme in the pathway or by ferric ion is not determined yet. The protein is O-methyltransferase lepI of Aspergillus flavus (strain ATCC 200026 / FGSC A1120 / IAM 13836 / NRRL 3357 / JCM 12722 / SRRC 167).